The chain runs to 464 residues: Asparagine--tRNA ligase (464 aa).

This sequence belongs to the class-II aminoacyl-tRNA synthetase family. Homodimer.

The protein resides in the cytoplasm. It carries out the reaction tRNA(Asn) + L-asparagine + ATP = L-asparaginyl-tRNA(Asn) + AMP + diphosphate + H(+). The sequence is that of Asparagine--tRNA ligase from Azobacteroides pseudotrichonymphae genomovar. CFP2.